The following is a 1700-amino-acid chain: Probable serine/threonine-protein kinase ifkC (1700 aa).

The segment at 1-25 (MPPKPKQKAKQPSQQPPPPPPPAAA) is disordered. Residues 14–23 (QQPPPPPPPA) show a composition bias toward pro residues. The RWD domain maps to 74 to 197 (MELEALQAIF…EIAKDFLNEN (124 aa)). Positions 454 to 463 (GLKKSPSTFE) are enriched in polar residues. A disordered region spans residues 454–488 (GLKKSPSTFEYSGEGGGGGVGGGSSQKTINPHQQS). Positions 466-477 (GEGGGGGVGGGS) are enriched in gly residues. Positions 479 to 488 (QKTINPHQQS) are enriched in polar residues. The region spanning 494–1027 (FEEIQLLGRG…AQQLLQSELM (534 aa)) is the Protein kinase domain. ATP-binding positions include 500 to 508 (LGRGGFGQV) and K523. 2 disordered regions span residues 568–639 (LTND…ENND) and 689–760 (GNNT…SSSK). The span at 572 to 639 (NSDDDDDDDD…SEFESEENND (68 aa)) shows a compositional bias: acidic residues. The span at 697–735 (SSNQHLQQQQQQNQSQQQKKQPQQNQSQQQKKLKNSNSK) shows a compositional bias: low complexity. The segment covering 736 to 752 (SKSKSKSKSKSKSKSNS) has biased composition (basic residues). The active-site Proton acceptor is the D822. 4 stretches are compositionally biased toward low complexity: residues 850-875 (TSTL…SSNS), 1135-1158 (NNSS…NTNS), 1230-1240 (SSNGNSNNNNS), and 1509-1531 (NNSN…SYNN). Disordered regions lie at residues 850-901 (TSTL…EVEG), 1134-1160 (FNNS…NSVV), 1216-1253 (KHHH…SNTT), and 1507-1531 (NLNN…SYNN).

It belongs to the protein kinase superfamily. Ser/Thr protein kinase family. GCN2 subfamily.

The catalysed reaction is L-seryl-[protein] + ATP = O-phospho-L-seryl-[protein] + ADP + H(+). It carries out the reaction L-threonyl-[protein] + ATP = O-phospho-L-threonyl-[protein] + ADP + H(+). The polypeptide is Probable serine/threonine-protein kinase ifkC (ifkC) (Dictyostelium discoideum (Social amoeba)).